The chain runs to 464 residues: Putative dipeptidase CPC735_014430 (464 aa).

The tract at residues 1 to 34 (MSTMSARDNEKGSARSQPSHAAASEIENVPRPSR) is disordered. Residues 40–56 (GTMIKVFIICACAGIVS) traverse the membrane as a helical segment. Residues H93, D95, and E206 each coordinate Zn(2+). C145 and C235 are disulfide-bonded. Substrate is bound at residue H233. Zn(2+) is bound by residues H277 and H298. The substrate site is built by R309 and D369. N382 carries N-linked (GlcNAc...) asparagine glycosylation.

It belongs to the metallo-dependent hydrolases superfamily. Peptidase M19 family. The cofactor is Zn(2+).

Its subcellular location is the membrane. The catalysed reaction is an L-aminoacyl-L-amino acid + H2O = 2 an L-alpha-amino acid. Hydrolyzes a wide range of dipeptides. The polypeptide is Putative dipeptidase CPC735_014430 (Coccidioides posadasii (strain C735) (Valley fever fungus)).